Reading from the N-terminus, the 840-residue chain is Heat shock 70 kDa protein 4 (840 aa).

Lys53 is modified (N6-acetyllysine). The residue at position 76 (Ser76) is a Phosphoserine. Residues Tyr89 and Tyr336 each carry the phosphotyrosine modification. Phosphoserine occurs at positions 393 and 415. Lys430 carries the N6-acetyllysine modification. The segment at Val500 to Ser575 is disordered. A compositionally biased stretch (basic and acidic residues) spans Gln514–Glu533. At Thr538 the chain carries Phosphothreonine. Ser546 and Ser647 each carry phosphoserine. The residue at position 660 (Tyr660) is a Phosphotyrosine. The residue at position 679 (Lys679) is an N6-acetyllysine. Ser756 carries the post-translational modification Phosphoserine. Position 773 is an N6-methyllysine (Lys773). Residues Ile783–Asp840 form a disordered region. Composition is skewed to basic and acidic residues over residues Pro788–Asn799 and Asp829–Asp840.

It belongs to the heat shock protein 70 family. In terms of assembly, interacts with TJP1/ZO-1.

It localises to the cytoplasm. The protein is Heat shock 70 kDa protein 4 (HSPA4) of Pongo abelii (Sumatran orangutan).